Consider the following 660-residue polypeptide: DNA mismatch repair protein MutL (660 aa).

Belongs to the DNA mismatch repair MutL/HexB family.

Its function is as follows. This protein is involved in the repair of mismatches in DNA. It is required for dam-dependent methyl-directed DNA mismatch repair. May act as a 'molecular matchmaker', a protein that promotes the formation of a stable complex between two or more DNA-binding proteins in an ATP-dependent manner without itself being part of a final effector complex. The protein is DNA mismatch repair protein MutL of Streptococcus pyogenes serotype M12 (strain MGAS2096).